The chain runs to 417 residues: MVLTNKQKEELNGAILDYFDSSGYKLTSTEFTKETNIELDPKLKGLLEKKWTSVIRLQKKVMDLEAKVSQLEEELNNGGRGPARRGKEDALPRQPEKHVLTGHRNCINAVRFHPLFSVIVSASEDATMRIWDFDSGDFERTLKGHTNAVQDIDFDKSGNLLASCSADLTIKLWDFQSFDCIKTLHGHDHNVSCVRFLPSGDQLVSSSRDKSIKVWETATGYCTKTLTGHEDWVRKVIVSEDGTTLASCSNDQTARVWNLAKGECLLTFREHSHVVECLAYSPANIVEVPGSLLSTPEGKAKAKAGAGGTSFGQAGYLATGSRDKTIKIWELATGRCLQTYIGHDNWVRSIKFHPCGKYLISVGDDKSIRVWDIAQGRCIKTINEAHSHFISCLDFCSHNPHIATGGVDDIIKIWKLG.

The LisH domain occupies 7-39 (QKEELNGAILDYFDSSGYKLTSTEFTKETNIEL). Positions 52-80 (TSVIRLQKKVMDLEAKVSQLEEELNNGGR) form a coiled coil. Residues 72-93 (EEELNNGGRGPARRGKEDALPR) form a disordered region. WD repeat units follow at residues 102–143 (GHRN…RTLK), 144–185 (GHTN…KTLH), 186–225 (GHDHNVSCVRFLPSGDQLVSSSRDKSIKVWETATGYCTKT), 228–267 (GHEDWVRKVIVSEDGTTLASCSNDQTARVWNLAKGECLLT), 270–339 (EHSH…CLQT), 342–383 (GHDN…KTIN), and 385–417 (AHSHFISCLDFCSHNPHIATGGVDDIIKIWKLG).

The protein belongs to the WD repeat LIS1/nudF family.

It is found in the cytoplasm. Its subcellular location is the cytoskeleton. The protein localises to the microtubule organizing center. The protein resides in the centrosome. Its function is as follows. Positively regulates the activity of the minus-end directed microtubule motor protein dynein. May enhance dynein-mediated microtubule sliding by targeting dynein to the microtubule plus end. Required for several dynein- and microtubule-dependent processes. The protein is Lissencephaly-1 homolog of Heterostelium pallidum (strain ATCC 26659 / Pp 5 / PN500) (Cellular slime mold).